A 241-amino-acid polypeptide reads, in one-letter code: DNA-binding dual master transcriptional regulator RpaA (241 aa).

In terms of domain architecture, Response regulatory spans 3–119 (RILIIDDDPA…EMLARVRALL (117 aa)). Aspartate 52 carries the post-translational modification 4-aspartylphosphate. A DNA-binding region (ompR/PhoB-type) is located at residues 132–231 (SEILNQGPLT…VYGAGYCLEL (100 aa)).

As to quaternary structure, interacts with reduced ferredoxin (petF). Interacts with CikA, RpaB, SasA, Sll0038 (pixG) and a number of other proteins. Post-translationally, phosphorylated by SasA; phosphorylation is maximal when KaiC phosphorylation is active during the circadian cycle. Dephosphorylated by CikA. CikA and SasA cooperation generates RpaA activity oscillation that is distinct from that generated by CikA or SasA alone and offset from the rhythm of KaiC phosphorylation.

It localises to the cytoplasm. Response regulator of 2 two-component regulatory systems SasA/RpaA and CikA/RpaA involved in genome-wide circadian gene expression. The histidine kinases have opposing effects modulated by the clock oscillator proteins; SasA phosphorylates RpaA (stimulated by fully phosphorylated KaiC1) while CikA dephosphorylates phospho-RpaA (stimulated by the phospho-Ser-432-KaiC1-KaiB complex). Functionally, the RpaA regulon is about 300 genes, and includes itself, cikA, sigE, sigG, genes involved in photosynthesis, carbon metabolism in the light and dark, phototaxis, CRISPR arrays 2 and 3 as well as nearly 90 ncRNAs. Genes are up- or down-regulated in its absence. Involved in regulation of primary sugar and amino acid metabolism and in adaptation to light changes. Regulates the accumulation of the monomeric photosystem I and the D1 protein under high light conditions. Overexpression causes cells to grow more slowly, increases levels of transcripts for clock oscillator genes in the light and the dark, increases levels of SigE protein, increases accumulation of sugar catabolic enzymes in the dark with concomitant decreases in most sugar metabolites. Plays a role in cell division; overexpression from the psbAII promoter increases expression of some cell-division-related genes, alters cell volume and changes the outer cell membrane and cell wall appearance. This chain is DNA-binding dual master transcriptional regulator RpaA, found in Synechocystis sp. (strain ATCC 27184 / PCC 6803 / Kazusa).